We begin with the raw amino-acid sequence, 154 residues long: Small ribosomal subunit protein uS9 (154 aa).

The tract at residues 135-154 is disordered; that stretch reads KESKKYGLKKARKAPQYSKR. Positions 140–154 are enriched in basic residues; the sequence is YGLKKARKAPQYSKR.

Belongs to the universal ribosomal protein uS9 family.

The protein is Small ribosomal subunit protein uS9 of Salinispora arenicola (strain CNS-205).